The following is a 344-amino-acid chain: Tripartite motif-containing protein 44 (344 aa).

The tract at residues 69–165 (PPASGDDALP…ETEAESEFDP (97 aa)) is disordered. Over residues 88 to 165 (EGEVESEVGE…ETEAESEFDP (78 aa)) the composition is skewed to acidic residues. A B box-type zinc finger spans residues 174–215 (VAKRKCPDHGLDLSTYCQEDRQLICVLCPVIGAHRGHQLSTL). Zn(2+) contacts are provided by C179, H182, C201, and H207. The stretch at 290-325 (AHVTEILADIQSHMDRLMTQMAQAKEQLDTSNESAE) forms a coiled coil. The disordered stretch occupies residues 309-344 (QMAQAKEQLDTSNESAEPKAEGDEEGPSGASEEEDT). Residues 330-344 (GDEEGPSGASEEEDT) are compositionally biased toward acidic residues. Phosphoserine occurs at positions 336 and 339.

Interacts (via coiled coil) with TRIM17 (via coiled coil).

May play a role in the process of differentiation and maturation of neuronal cells. May regulate the activity of TRIM17. Is a negative regulator of PAX6 expression. The sequence is that of Tripartite motif-containing protein 44 (Trim44) from Rattus norvegicus (Rat).